Consider the following 596-residue polypeptide: Alkaline phosphatase 4 (596 aa).

A signal peptide spans 1 to 20 (MHCLVILGFLLGSLVAFSWA). D93 is a Mg(2+) binding site. D93 contacts Zn(2+). S144 serves as the catalytic Phosphoserine intermediate. H202 and T204 together coordinate Mg(2+). N262 and N297 each carry an N-linked (GlcNAc...) asparagine glycan. A Mg(2+)-binding site is contributed by E369. Residues D374 and H378 each coordinate Zn(2+). N-linked (GlcNAc...) asparagine glycosylation is present at N401. Zn(2+)-binding residues include D415 and H416. Residues N464 and N470 are each glycosylated (N-linked (GlcNAc...) asparagine). H504 contacts Zn(2+). An intrachain disulfide couples C539 to C550. Basic and acidic residues predominate over residues 548 to 566 (DSCEDHKDGQKDRPLDKPN). Residues 548–570 (DSCEDHKDGQKDRPLDKPNPKRN) are disordered. N570 carries the GPI-anchor amidated asparagine lipid modification. Residues 571–591 (GATVVGASLIPILTAATAAIL) traverse the membrane as a helical segment. The propeptide at 571 to 596 (GATVVGASLIPILTAATAAILRGRGL) is removed in mature form.

This sequence belongs to the alkaline phosphatase family. Homodimer. Mg(2+) is required as a cofactor. The cofactor is Zn(2+). As to expression, ellipsoid body ring neurons in the adult brain and in the lower Malpighian tubule and ureter.

It is found in the cell membrane. It carries out the reaction a phosphate monoester + H2O = an alcohol + phosphate. Functionally, important role in neural and renal epithelial function. This chain is Alkaline phosphatase 4, found in Drosophila melanogaster (Fruit fly).